The chain runs to 380 residues: Glucose-1-phosphate adenylyltransferase (380 aa).

Alpha-D-glucose 1-phosphate-binding positions include Gly-164, 179-180 (EK), and Ser-190.

It belongs to the bacterial/plant glucose-1-phosphate adenylyltransferase family. Homotetramer.

The enzyme catalyses alpha-D-glucose 1-phosphate + ATP + H(+) = ADP-alpha-D-glucose + diphosphate. It participates in glycan biosynthesis; glycogen biosynthesis. Its function is as follows. Involved in the biosynthesis of ADP-glucose, a building block required for the elongation reactions to produce glycogen. Catalyzes the reaction between ATP and alpha-D-glucose 1-phosphate (G1P) to produce pyrophosphate and ADP-Glc. The sequence is that of Glucose-1-phosphate adenylyltransferase from Lactococcus lactis subsp. cremoris (strain MG1363).